Reading from the N-terminus, the 440-residue chain is Fibulin-7 (440 aa).

The signal sequence occupies residues 1 to 24 (MGPGSQRALFLLLLLLASPGARAF). Positions 28 to 73 (LNKQQLLTTIRQLQQLLKGQETRFTEGIRNMKSRLAALQNTVNKMT) form a coiled coil. A Sushi domain is found at 79–136 (VSCPALEAPPDGKKFGSKYLVDHEVYFTCNPGFQLVGPSSVVCLANGSWTGEQPRCRD). Intrachain disulfides connect C81–C121, C107–C134, C140–C151, C145–C160, C162–C171, C229–C245, C241–C254, C256–C269, C275–C288, C282–C297, and C302–C319. An N-linked (GlcNAc...) asparagine glycan is attached at N124. One can recognise an EGF-like 1; calcium-binding domain in the interval 136–172 (DISECSSQPCHNGGTCVEGINHYRCICPPGKTGNRCQ). The 46-residue stretch at 225 to 270 (DVNECEIYGQKGRPRLCMHACVNTPGSYRCTCPSGYRILADGKSCE) folds into the EGF-like 2; calcium-binding domain. The 50-residue stretch at 271–320 (DVDECAGPQHMCPRGTTCINTGGGFQCVNPECPEGSGNISYVKTSPFQCE) folds into the EGF-like 3; calcium-binding domain. N-linked (GlcNAc...) asparagine glycosylation occurs at N308.

This sequence belongs to the fibulin family. As to quaternary structure, interacts with heparin, FBLN1, FN1 and DSPP. Preferentially binds dental mesenchyme cells and odontoblasts but not dental epithelial cells or nondental cells. Binding requires a heparan sulfate-containing receptor on the cell surface as well as an integrin. In terms of processing, N-glycosylated. Highly expressed in newborn incisors and molars. A weaker expression is seen in the brain, kidneys, muscles and bones.

Its subcellular location is the secreted. The protein localises to the extracellular space. The protein resides in the extracellular matrix. In terms of biological role, an adhesion molecule that interacts with extracellular matrix molecules in developing teeth and may play important roles in differentiation and maintenance of odontoblasts as well as in dentin formation. The sequence is that of Fibulin-7 (Fbln7) from Mus musculus (Mouse).